The following is a 621-amino-acid chain: Glutamine--fructose-6-phosphate aminotransferase [isomerizing] (621 aa).

The Nucleophile; for GATase activity role is filled by Cys2. The Glutamine amidotransferase type-2 domain maps to 2 to 223 (CGIIGYVGEG…DRELGIISIS (222 aa)). 2 consecutive SIS domains span residues 289-436 (LHLE…HKFT) and 470-611 (LSKQ…IDKP). Catalysis depends on Lys616, which acts as the For Fru-6P isomerization activity.

In terms of assembly, homodimer.

It localises to the plastid. The protein resides in the chloroplast. The enzyme catalyses D-fructose 6-phosphate + L-glutamine = D-glucosamine 6-phosphate + L-glutamate. Catalyzes the first step in hexosamine metabolism, converting fructose-6P into glucosamine-6P using glutamine as a nitrogen source. In Cyanidium caldarium (Red alga), this protein is Glutamine--fructose-6-phosphate aminotransferase [isomerizing].